A 131-amino-acid polypeptide reads, in one-letter code: Hydrogenase maturation factor HypA (131 aa).

His-2 lines the Ni(2+) pocket. The Zn(2+) site is built by Cys-73, Cys-76, Cys-105, and Cys-108.

This sequence belongs to the HypA/HybF family.

Its function is as follows. Involved in the maturation of [NiFe] hydrogenases. Required for nickel insertion into the metal center of the hydrogenase. This chain is Hydrogenase maturation factor HypA, found in Thermomicrobium roseum (strain ATCC 27502 / DSM 5159 / P-2).